Reading from the N-terminus, the 303-residue chain is N-acetyl-D-glucosamine kinase (303 aa).

ATP contacts are provided by residues 4–11 (GFDIGGTK) and 133–140 (GVGGGLVL). Residues His157, Cys177, Cys179, and Cys184 each coordinate Zn(2+).

This sequence belongs to the ROK (NagC/XylR) family. NagK subfamily.

The enzyme catalyses N-acetyl-D-glucosamine + ATP = N-acetyl-D-glucosamine 6-phosphate + ADP + H(+). It functions in the pathway cell wall biogenesis; peptidoglycan recycling. Catalyzes the phosphorylation of N-acetyl-D-glucosamine (GlcNAc) derived from cell-wall degradation, yielding GlcNAc-6-P. The protein is N-acetyl-D-glucosamine kinase of Citrobacter koseri (strain ATCC BAA-895 / CDC 4225-83 / SGSC4696).